The sequence spans 611 residues: MIIRHLSENIINQIAAGEVIERPANVIKELVENAIDAQATRIEISIVNGGKNFIRVSDNGCGIPADQLTLAVSRHCTSKIVDDVSNICFLGFRGEALPSIGSVAKLKLTSRTQDADNANEISVIAGKIEGPKPAAANPGTIVEVRDLFFVTPARLKFMKTDRAETSAITDMIKRIAIAFPHIRFSLSSTDRMLMEFPATENNTQGQLQRITQIMGKEFAPNSIALNAERESVRLTGFTCLPSFNRSNSLHQFAYVNGRPVRDKLLWGAIRGAYADAIARDRHAVSIIFIDLPPADVDVNVHPTKADVRFRDPGLIRGLIIGAIHEALHQAGVRHTSTHSESVLTAFQIHPLENLKSAQRPFSYTSQPYHRVSTTTSMLQKPLDDSIDLREGIVPMMECLSAPSSDTRATIQTSPTEELHYPLGAAKAQIHKNYIISQTQDSLIIVDQHAAHERLVYEALKNALYSKPLSSQLLLIPEIVELSEEDAACLLTHKDSLQKFGLGIEPFGPGAILVRETPAMLGEINAQALIKDLADEAAEYDTTNNLKAMLDYVAATMACHSSVRSGRLLRPEEMNALLRQIEETPHSSTCNHGRPTYIELKLADIERLFGRK.

It belongs to the DNA mismatch repair MutL/HexB family.

In terms of biological role, this protein is involved in the repair of mismatches in DNA. It is required for dam-dependent methyl-directed DNA mismatch repair. May act as a 'molecular matchmaker', a protein that promotes the formation of a stable complex between two or more DNA-binding proteins in an ATP-dependent manner without itself being part of a final effector complex. The sequence is that of DNA mismatch repair protein MutL from Bartonella bacilliformis (strain ATCC 35685 / KC583 / Herrer 020/F12,63).